Consider the following 1423-residue polypeptide: DNA-directed RNA polymerase subunit beta' (1423 aa).

The Zn(2+) site is built by Cys70, Cys72, Cys85, and Cys88. Positions 461, 463, and 465 each coordinate Mg(2+). Zn(2+)-binding residues include Cys809, Cys883, Cys890, and Cys893. Residues 1383–1423 are disordered; the sequence is EEHAAELRQPVQADTGDDPLGAVVGESHGTDADAGDYLTEE.

It belongs to the RNA polymerase beta' chain family. The RNAP catalytic core consists of 2 alpha, 1 beta, 1 beta' and 1 omega subunit. When a sigma factor is associated with the core the holoenzyme is formed, which can initiate transcription. Requires Mg(2+) as cofactor. Zn(2+) serves as cofactor.

It carries out the reaction RNA(n) + a ribonucleoside 5'-triphosphate = RNA(n+1) + diphosphate. Its function is as follows. DNA-dependent RNA polymerase catalyzes the transcription of DNA into RNA using the four ribonucleoside triphosphates as substrates. The protein is DNA-directed RNA polymerase subunit beta' of Rhizorhabdus wittichii (strain DSM 6014 / CCUG 31198 / JCM 15750 / NBRC 105917 / EY 4224 / RW1) (Sphingomonas wittichii).